A 168-amino-acid polypeptide reads, in one-letter code: G/U mismatch-specific DNA glycosylase (168 aa).

It belongs to the uracil-DNA glycosylase (UDG) superfamily. TDG/mug family. In terms of assembly, binds DNA as a monomer.

Its subcellular location is the cytoplasm. It catalyses the reaction Specifically hydrolyzes mismatched double-stranded DNA and polynucleotides, releasing free uracil.. In terms of biological role, excises ethenocytosine and uracil, which can arise by alkylation or deamination of cytosine, respectively, from the corresponding mispairs with guanine in ds-DNA. It is capable of hydrolyzing the carbon-nitrogen bond between the sugar-phosphate backbone of the DNA and the mispaired base. The complementary strand guanine functions in substrate recognition. Required for DNA damage lesion repair in stationary-phase cells. The polypeptide is G/U mismatch-specific DNA glycosylase (Escherichia coli O157:H7 (strain EC4115 / EHEC)).